Here is a 305-residue protein sequence, read N- to C-terminus: Acetyl-coenzyme A carboxylase carboxyl transferase subunit beta (305 aa).

One can recognise a CoA carboxyltransferase N-terminal domain in the interval 29–298 (LWTKCESCDA…EMKLPLLESS (270 aa)). Residues C33, C36, C52, and C55 each coordinate Zn(2+). The C4-type zinc finger occupies 33–55 (CESCDALTYTKDLQANLMVCLQC).

This sequence belongs to the AccD/PCCB family. In terms of assembly, acetyl-CoA carboxylase is a heterohexamer composed of biotin carboxyl carrier protein (AccB), biotin carboxylase (AccC) and two subunits each of ACCase subunit alpha (AccA) and ACCase subunit beta (AccD). The cofactor is Zn(2+).

It is found in the cytoplasm. It carries out the reaction N(6)-carboxybiotinyl-L-lysyl-[protein] + acetyl-CoA = N(6)-biotinyl-L-lysyl-[protein] + malonyl-CoA. The protein operates within lipid metabolism; malonyl-CoA biosynthesis; malonyl-CoA from acetyl-CoA: step 1/1. Component of the acetyl coenzyme A carboxylase (ACC) complex. Biotin carboxylase (BC) catalyzes the carboxylation of biotin on its carrier protein (BCCP) and then the CO(2) group is transferred by the transcarboxylase to acetyl-CoA to form malonyl-CoA. This Synechococcus sp. (strain ATCC 27144 / PCC 6301 / SAUG 1402/1) (Anacystis nidulans) protein is Acetyl-coenzyme A carboxylase carboxyl transferase subunit beta.